The following is a 28-amino-acid chain: Endoglucanase (28 aa).

Glu20 acts as the Nucleophile in catalysis.

This sequence belongs to the glycosyl hydrolase 5 (cellulase A) family.

The protein localises to the cell membrane. It catalyses the reaction Endohydrolysis of (1-&gt;4)-beta-D-glucosidic linkages in cellulose, lichenin and cereal beta-D-glucans.. This is Endoglucanase from Schizophyllum commune (Split gill fungus).